A 392-amino-acid chain; its full sequence is NAD(P)H-quinone oxidoreductase subunit H (392 aa).

This sequence belongs to the complex I 49 kDa subunit family. In terms of assembly, NDH-1 can be composed of about 15 different subunits; different subcomplexes with different compositions have been identified which probably have different functions.

The protein localises to the cellular thylakoid membrane. The catalysed reaction is a plastoquinone + NADH + (n+1) H(+)(in) = a plastoquinol + NAD(+) + n H(+)(out). It catalyses the reaction a plastoquinone + NADPH + (n+1) H(+)(in) = a plastoquinol + NADP(+) + n H(+)(out). Functionally, NDH-1 shuttles electrons from an unknown electron donor, via FMN and iron-sulfur (Fe-S) centers, to quinones in the respiratory and/or the photosynthetic chain. The immediate electron acceptor for the enzyme in this species is believed to be plastoquinone. Couples the redox reaction to proton translocation, and thus conserves the redox energy in a proton gradient. Cyanobacterial NDH-1 also plays a role in inorganic carbon-concentration. The protein is NAD(P)H-quinone oxidoreductase subunit H of Synechococcus sp. (strain JA-2-3B'a(2-13)) (Cyanobacteria bacterium Yellowstone B-Prime).